An 844-amino-acid chain; its full sequence is Receptor-like protein 49 (844 aa).

The first 31 residues, 1–31 (MMYSCRERRMITVKWSLCLIFCLSNSILVFA), serve as a signal peptide directing secretion. Residues 32–803 (KHLCLPDQRD…QDEEKEEEEQ (772 aa)) are Extracellular-facing. N59, N95, N112, and N159 each carry an N-linked (GlcNAc...) asparagine glycan. LRR repeat units follow at residues 102–126 (QHLQKLYLGCNTSFGSLSYNDGLKG), 136–160 (LKYLKVLSLRGCNLFGKIPSSLGNL), 161–183 (SYLTHLDLSFNDFTGVIPDSMGN), 185–208 (NYLRVLNLGKCNFYGKVPSSLGNL), 209–231 (SYLAQLDLSYNDFTREGPDSMGN), 242–265 (LNSLTDIDLGSNQLKGMLPSNMSS), 266–290 (LSKLEYFYIGGNSFSGSIPSSLFMI), 292–313 (SLVELDLQRNHFSALEIGNISS), 315–339 (SKLQVLILGGNNFNPDIVDLSIFSP), 345–362 (YLDVSGINLKISSTVSLP), 363–385 (SPIEYLVLSSCNISEFPKFLRNQ), 386–409 (TKLYSLDISANQIEGQVPEWLWSL), 410–434 (PELQSINISHNSFNGFEGPADVIQG), 436–457 (GELYMLDISSNIFQDPFPLLPV), 458–481 (DSMNFLFSSNNRFSGEIPKTICEL), 482–504 (DNLVMLVLSNNNFSGSIPRCFEN), 506–527 (HLYVLHLRNNNLSGIFPEEAIS), 528–551 (DRLQSLDVGHNLFSGELPKSLINC), 553–574 (ALEFLYVEDNRISDTFPSWLEL), 575–601 (LPNFQILVLRSNEFYGPIFSPGDSLSF), 602–625 (PRLRIFDISENRFTGVLPSDYFAP), 665–689 (FTIYKTIDVSGNRLEGDIPESISLL), 690–713 (KELIVLNMSNNAFTGHIPPSLSNL), 714–737 (SNLQSLDLSQNRLSGSIPGELGEL), and 739–762 (FLARMNFSYNRLEGPIPQTTQIQT). N-linked (GlcNAc...) asparagine glycosylation is present at N207. N-linked (GlcNAc...) asparagine glycosylation is present at N262. N310 carries N-linked (GlcNAc...) asparagine glycosylation. 2 N-linked (GlcNAc...) asparagine glycosylation sites follow: N374 and N384. N-linked (GlcNAc...) asparagine glycosylation occurs at N416. N-linked (GlcNAc...) asparagine glycosylation is found at N493, N516, and N550. Residues N696 and N712 are each glycosylated (N-linked (GlcNAc...) asparagine). Residue N744 is glycosylated (N-linked (GlcNAc...) asparagine). A helical transmembrane segment spans residues 804 to 824 (VFSWIAAAIGYVPGVVCGLTI). Residues 825–844 (GHILVSHKRDWFMRIVSLFT) are Cytoplasmic-facing.

Belongs to the RLP family.

It is found in the cell membrane. This is Receptor-like protein 49 from Arabidopsis thaliana (Mouse-ear cress).